Here is a 455-residue protein sequence, read N- to C-terminus: Golgi pH regulator (455 aa).

A run of 5 helical transmembrane segments spans residues 5–25 (IDSSIMITSQILFFGFGWLFF), 46–66 (VTFAFSCTMFELIIFEILGVL), 79–99 (LCVILLILVFMVPFYIGYFIV), 114–134 (CLLWLTFMYFFWKLGDPFPIL), and 150–170 (VGVIGVTLMALLSGFGAVNCP). Residues asparagine 180 and asparagine 243 are each glycosylated (N-linked (GlcNAc...) asparagine). A run of 4 helical transmembrane segments spans residues 290–310 (GYFFSIYCVWKIFMATINIVF), 343–363 (ISFILVGIIIVTSIRGLLITL), 378–398 (VIVLLLAQIMGMYFVSSVLLI), and 425–445 (WFDVIFLVSALSSILFLYLAH).

Belongs to the Golgi pH regulator (TC 1.A.38) family. Homotrimer. Interacts with RABL3; the interaction stabilizes GPR89A.

The protein localises to the golgi apparatus membrane. The catalysed reaction is iodide(out) = iodide(in). It catalyses the reaction chloride(in) = chloride(out). The enzyme catalyses bromide(in) = bromide(out). It carries out the reaction fluoride(in) = fluoride(out). In terms of biological role, voltage-gated channel that enables the transfer of monoatomic anions such as iodide, chloride, bromide and fluoride which may function in counter-ion conductance and participates in Golgi acidification. Plays a role in lymphocyte development, probably by acting as a RABL3 effector in hematopoietic cells. In Bos taurus (Bovine), this protein is Golgi pH regulator.